The sequence spans 109 residues: MTLKLIWDKFYVSIIFVLTCIVLGIILMCTVVGGGSDYSEVNVNEGDSLWALADQYAGKSDMAKADFVSWVEKENNLSDGHVEAGDSVVIPVHKTKLLKSDSTIQLANQ.

The region spanning 39–90 (SEVNVNEGDSLWALADQYAGKSDMAKADFVSWVEKENNLSDGHVEAGDSVVI) is the LysM domain.

Belongs to the YneA family.

The protein localises to the cytoplasm. Functionally, inhibits cell division during the SOS response. Affects a later stage of the cell division protein assembly, after the assembly of the Z ring, by probably suppressing recruitment of FtsL and/or DivIC to the division machinery. This Listeria monocytogenes serovar 1/2a (strain ATCC BAA-679 / EGD-e) protein is Cell division suppressor protein YneA.